A 321-amino-acid chain; its full sequence is Lipoyl synthase (321 aa).

[4Fe-4S] cluster is bound by residues C68, C73, C79, C94, C98, C101, and S308. A Radical SAM core domain is found at 80–297 (FNHGTATFMI…KAEAMAMGFT (218 aa)).

It belongs to the radical SAM superfamily. Lipoyl synthase family. [4Fe-4S] cluster is required as a cofactor.

The protein resides in the cytoplasm. The enzyme catalyses [[Fe-S] cluster scaffold protein carrying a second [4Fe-4S](2+) cluster] + N(6)-octanoyl-L-lysyl-[protein] + 2 oxidized [2Fe-2S]-[ferredoxin] + 2 S-adenosyl-L-methionine + 4 H(+) = [[Fe-S] cluster scaffold protein] + N(6)-[(R)-dihydrolipoyl]-L-lysyl-[protein] + 4 Fe(3+) + 2 hydrogen sulfide + 2 5'-deoxyadenosine + 2 L-methionine + 2 reduced [2Fe-2S]-[ferredoxin]. It functions in the pathway protein modification; protein lipoylation via endogenous pathway; protein N(6)-(lipoyl)lysine from octanoyl-[acyl-carrier-protein]: step 2/2. Functionally, catalyzes the radical-mediated insertion of two sulfur atoms into the C-6 and C-8 positions of the octanoyl moiety bound to the lipoyl domains of lipoate-dependent enzymes, thereby converting the octanoylated domains into lipoylated derivatives. This chain is Lipoyl synthase, found in Enterobacter sp. (strain 638).